We begin with the raw amino-acid sequence, 124 residues long: Meiotically up-regulated gene 103 protein (124 aa).

Its subcellular location is the nucleus. The protein resides in the nucleolus. Has a role in meiosis. This Schizosaccharomyces pombe (strain 972 / ATCC 24843) (Fission yeast) protein is Meiotically up-regulated gene 103 protein (mug103).